A 253-amino-acid polypeptide reads, in one-letter code: Redox-sensing transcriptional repressor Rex (253 aa).

Residues 26-65 constitute a DNA-binding region (H-T-H motif); the sequence is LYLRALTALSERSVPTVSSEELATAAGVNSAKLRKDFSYL. Residue 100 to 105 participates in NAD(+) binding; sequence GIGNLG. The interval 217–253 is disordered; the sequence is RKAGEDSAAEDEGAPPMRATPASRKGPDGDMPAVMPA.

The protein belongs to the transcriptional regulatory Rex family. Homodimer.

Its subcellular location is the cytoplasm. Modulates transcription in response to changes in cellular NADH/NAD(+) redox state. This chain is Redox-sensing transcriptional repressor Rex, found in Streptomyces griseus subsp. griseus (strain JCM 4626 / CBS 651.72 / NBRC 13350 / KCC S-0626 / ISP 5235).